The primary structure comprises 1558 residues: ABC transporter NFT1 (1558 aa).

Topologically, residues 1 to 29 are extracellular; the sequence is MIKNGTCPYWERDDLSECARREYIEFKFP. The N-linked (GlcNAc...) asparagine glycan is linked to Asn-4. Residues 30 to 50 form a helical membrane-spanning segment; sequence LFILLTGMIYAFCKVFRAFYL. Topologically, residues 51–103 are cytoplasmic; that stretch reads RGKNHTNEAPEFEEQGNGNHEYARFSVLRLKSAWESRSFCNVNNRSTFDKFKK. A helical transmembrane segment spans residues 104 to 124; the sequence is FIEGAFIVLQLTIHLYILSSM. Residues 125–130 are Extracellular-facing; sequence PMDNKK. The helical transmembrane segment at 131 to 151 threads the bilayer; it reads FFHQGFLVQMFLWILLLVVIT. At 152–169 the chain is on the cytoplasmic side; it reads LRLISASQSFRWVLACKR. The helical transmembrane segment at 170 to 190 threads the bilayer; it reads DLWAVSFYSYASLFTLSILPL. At 191 to 201 the chain is on the extracellular side; it reads RSVFIGKIKDK. Residues 202–222 form a helical membrane-spanning segment; sequence IMVKYIISETFIDLALLLLLS. Over 223–302 the chain is Cytoplasmic; that stretch reads TSSIEGTRYS…SSKKGRLLPN (80 aa). A helical membrane pass occupies residues 303 to 323; that stretch reads IICYFKAVFISQLFLAFVSSF. An ABC transmembrane type-1 1 domain is found at 311–621; that stretch reads FISQLFLAFV…IASTVSLLIQ (311 aa). Over 324–351 the chain is Extracellular; that stretch reads LNFVPSLLMPRILSYVNDPKSKSWNLVS. The helical transmembrane segment at 352–374 threads the bilayer; that stretch reads LYVSSMLVSKIIATTCRGQGLFL. Topologically, residues 375–449 are cytoplasmic; it reads GEKGTMQLRT…VMSIDAFKVS (75 aa). The tract at residues 410–434 is disordered; that stretch reads NASTSFEENPDSSEAEPRKKSSRKD. Residues 424 to 434 show a composition bias toward basic and acidic residues; the sequence is AEPRKKSSRKD. Residues 450-470 form a helical membrane-spanning segment; that stretch reads EAMNTFYLACEAVFMTVTALM. The Extracellular segment spans residues 471 to 481; it reads ILYSLLGWSAF. A helical membrane pass occupies residues 482-504; sequence AGTFALLAMIPLNFWCATFYGNY. Topologically, residues 505–558 are cytoplasmic; sequence QADQLILTDKRTSGISEALNSIRVIKLLAWENLFYQKIINVRDGEIRLLKKKAT. Residues 559 to 579 traverse the membrane as a helical segment; sequence IFFLNHLIWFFGPTLVSAITF. The Extracellular portion of the chain corresponds to 580 to 584; the sequence is SVFIK. The chain crosses the membrane as a helical span at residues 585-605; that stretch reads FQNQTLTPTIAFTALSLFAIL. Residues 606 to 953 lie on the Cytoplasmic side of the membrane; the sequence is RTPMDQIAST…KFSAYKWLAD (348 aa). The region spanning 651–892 is the ABC transporter 1 domain; it reads FGFEDASMEW…NEFLRESINN (242 aa). ATP is bound at residue 686-693; it reads GPTGSGKS. Positions 892-901 are enriched in polar residues; the sequence is NDSKNTTHNQ. The interval 892-926 is disordered; sequence NDSKNTTHNQIDLKRSTTSKKTKNGDPEGGNSQDE. Residues 954-974 form a helical membrane-spanning segment; the sequence is YFGGLGVVFVFTSSSILIHGI. The 291-residue stretch at 961-1251 folds into the ABC transmembrane type-1 2 domain; sequence VFVFTSSSIL…IIKVFSSVEL (291 aa). The Extracellular portion of the chain corresponds to 975–1013; the sequence is TLSQGFWLRYWLDTGSSGSKSTWLYRIVEGHSNIYFLLT. A helical membrane pass occupies residues 1014 to 1034; it reads YIIIGLVSSFLTSGKVWIAII. The Cytoplasmic segment spans residues 1035-1082; the sequence is SGTNVTKKIFAKLLSSILYAKLRFHNVTPTGRIMNRFSKDMDIIDQQL. The helical transmembrane segment at 1083-1105 threads the bilayer; the sequence is IPNFEGLSYSVVVCLWIILLIGY. The Extracellular portion of the chain corresponds to 1106–1109; it reads VTPQ. Residues 1110-1132 form a helical membrane-spanning segment; sequence FLLFAIPLCALYYTVCTLYLRAS. Over 1133-1199 the chain is Cytoplasmic; sequence RELKRIDNIN…ATEWITYRVD (67 aa). The chain crosses the membrane as a helical span at residues 1200 to 1220; it reads IIGTLVLFSSSVMIIMKASYL. Residues 1221 to 1222 are Extracellular-facing; sequence DA. A helical transmembrane segment spans residues 1223-1243; that stretch reads GLAGILLSNAFSFTETAQWII. At 1244–1558 the chain is on the cytoplasmic side; it reads KVFSSVELLM…LAKVSFDNKR (315 aa). Residues 1285–1538 enclose the ABC transporter 2 domain; sequence VELKNLSLRY…RNTIFYRLCR (254 aa). Residue 1319–1326 participates in ATP binding; that stretch reads GRTGAGKS.

It belongs to the ABC transporter superfamily. ABCC family. Conjugate transporter (TC 3.A.1.208) subfamily.

It localises to the membrane. The protein is ABC transporter NFT1 (NFT1) of Saccharomyces cerevisiae (Baker's yeast).